The primary structure comprises 152 residues: Phospholipase A2 GL16-1 (152 aa).

Positions 1 to 21 (MNPAHLLVLLAVCVSLLGAST) are cleaved as a signal peptide. Residues 22 to 27 (IPPLPL) constitute a propeptide that is removed on maturation. Disulfide bonds link Cys38–Cys104, Cys54–Cys151, Cys56–Cys72, Cys71–Cys132, Cys78–Cys125, Cys88–Cys118, and Cys111–Cys123. Positions 55, 57, and 59 each coordinate Ca(2+). His75 is a catalytic residue. Residue Asp76 coordinates Ca(2+). Residue Asp126 is part of the active site.

This sequence belongs to the phospholipase A2 family. Group I subfamily. Ca(2+) is required as a cofactor.

The protein localises to the secreted. The catalysed reaction is a 1,2-diacyl-sn-glycero-3-phosphocholine + H2O = a 1-acyl-sn-glycero-3-phosphocholine + a fatty acid + H(+). Its function is as follows. PA2 catalyzes the calcium-dependent hydrolysis of the 2-acyl groups in 3-sn-phosphoglycerides. The sequence is that of Phospholipase A2 GL16-1 from Laticauda semifasciata (Black-banded sea krait).